A 983-amino-acid chain; its full sequence is Isoleucine--tRNA ligase (983 aa).

Positions 61–71 (PYANGELHVGH) match the 'HIGH' region motif. Residue glutamate 608 participates in L-isoleucyl-5'-AMP binding. The 'KMSKS' region motif lies at 649–653 (KMSKS). Position 652 (lysine 652) interacts with ATP. Zn(2+)-binding residues include cysteine 952, cysteine 955, cysteine 972, and cysteine 975.

It belongs to the class-I aminoacyl-tRNA synthetase family. IleS type 1 subfamily. As to quaternary structure, monomer. The cofactor is Zn(2+).

The protein resides in the cytoplasm. It carries out the reaction tRNA(Ile) + L-isoleucine + ATP = L-isoleucyl-tRNA(Ile) + AMP + diphosphate. Functionally, catalyzes the attachment of isoleucine to tRNA(Ile). As IleRS can inadvertently accommodate and process structurally similar amino acids such as valine, to avoid such errors it has two additional distinct tRNA(Ile)-dependent editing activities. One activity is designated as 'pretransfer' editing and involves the hydrolysis of activated Val-AMP. The other activity is designated 'posttransfer' editing and involves deacylation of mischarged Val-tRNA(Ile). In Gloeobacter violaceus (strain ATCC 29082 / PCC 7421), this protein is Isoleucine--tRNA ligase.